Consider the following 494-residue polypeptide: UPF0371 protein SEQ_1471 (494 aa).

This sequence belongs to the UPF0371 family.

This is UPF0371 protein SEQ_1471 from Streptococcus equi subsp. equi (strain 4047).